Here is a 202-residue protein sequence, read N- to C-terminus: Small ribosomal subunit protein uS4c (202 aa).

One can recognise an S4 RNA-binding domain in the interval 90–153; it reads MRLDNIIFRL…KSEAIISKNI (64 aa).

It belongs to the universal ribosomal protein uS4 family. Part of the 30S ribosomal subunit. Contacts protein S5. The interaction surface between S4 and S5 is involved in control of translational fidelity.

Its subcellular location is the plastid. It is found in the chloroplast. In terms of biological role, one of the primary rRNA binding proteins, it binds directly to 16S rRNA where it nucleates assembly of the body of the 30S subunit. Its function is as follows. With S5 and S12 plays an important role in translational accuracy. The protein is Small ribosomal subunit protein uS4c (rps4) of Leucodon sciuroides (Moss).